Here is a 294-residue protein sequence, read N- to C-terminus: MNIKVSLLFILPIFLLLLTSKVKAGDIVVYWGQDVGEGKLIDTCNSGLYNIVNIAFLSSFGNFQTPKLNLAGHCEPSSGGCQQLTKSIRHCQSIGIKIMLSIGGGTPTYTLSSVDDARQVADYLWNNFLGGQSSFRPLGDAVLDGIDFDIELGQPHYIALARRLSEHGQQGKKLYLTAAPQCPFPDKLLNGALQTGLFDYVWVQFYNNPECEFMSNSENFKRRWNQWTSIPAKKLYIGLPAAKTAAGNGYIPKQVLMSQVLPFLKGSSKYGGVMLWNRKFDVQCGYSSAIRGAV.

The N-terminal stretch at 1–24 is a signal peptide; it reads MNIKVSLLFILPIFLLLLTSKVKA. The GH18 domain maps to 25 to 294; sequence GDIVVYWGQD…GYSSAIRGAV (270 aa). Disulfide bonds link Cys-44-Cys-91 and Cys-74-Cys-81. The Proton donor role is filled by Glu-151. A disulfide bridge connects residues Cys-182 and Cys-211.

It belongs to the glycosyl hydrolase 18 family. Chitinase class II subfamily.

The enzyme catalyses Random endo-hydrolysis of N-acetyl-beta-D-glucosaminide (1-&gt;4)-beta-linkages in chitin and chitodextrins.. This protein functions as a defense against chitin containing fungal pathogens. The chain is Basic endochitinase from Nicotiana tabacum (Common tobacco).